The chain runs to 340 residues: Extracellular matrix protein-binding protein emp (340 aa).

A signal peptide spans 1–26 (MKKKLLVLTMSTLFATQIMNSNHAKA).

It localises to the cell surface. In terms of biological role, adhesin that binds to the host cell extracellular matrix proteins fibronectin, fibrinogen, collagen, and vitronectin. The protein is Extracellular matrix protein-binding protein emp (emp) of Staphylococcus aureus (strain USA300).